A 560-amino-acid polypeptide reads, in one-letter code: Aluminum-activated malate transporter 12 (560 aa).

6 helical membrane passes run 54–74, 78–98, 104–124, 130–150, 156–176, and 189–209; these read VGLS…FKGI, AIWA…ATLC, GLGT…ANDS, AIFI…IRFI, NYDY…VSSY, and FYTI…VFPI. Residues 386 to 421 are disordered; that stretch reads LHRHNNKHQNGSISNNKHHQRNSSNSGKDLNGDVSL. Residues 407 to 421 show a composition bias toward polar residues; the sequence is NSSNSGKDLNGDVSL.

Belongs to the aromatic acid exporter (TC 2.A.85) family. In terms of tissue distribution, expressed in roots, stems, leaves, flowers and pollen. Mainly detected in the roots vascular stele and in the leaves guard cells.

It localises to the cell membrane. Functionally, malate-sensitive anion transporter permeable to chloride, nitrate, sulfate and malate. Involved in dark-, CO(2)-, abscisic acid- and water-deficient-induced stomatal closure. Belongs to the R-type anion channels. This chain is Aluminum-activated malate transporter 12 (ALMT12), found in Arabidopsis thaliana (Mouse-ear cress).